Consider the following 1220-residue polypeptide: DNA polymerase catalytic subunit (1220 aa).

This sequence belongs to the DNA polymerase type-B family. As to quaternary structure, forms a complex with the ssDNA-binding protein, the DNA polymerase processivity factor, and the alkaline exonuclease. Interacts with the helicase-primase complex composed of the primase, the helicase and the primase-associated factor; this interaction may coordinate leading and lagging strand DNA synthesis at the replication fork.

The protein localises to the host nucleus. The enzyme catalyses DNA(n) + a 2'-deoxyribonucleoside 5'-triphosphate = DNA(n+1) + diphosphate. The catalysed reaction is Endonucleolytic cleavage to 5'-phosphomonoester.. Functionally, replicates viral genomic DNA. The replication complex is composed of six viral proteins: the DNA polymerase, processivity factor, primase, primase-associated factor, helicase, and ssDNA-binding protein. Additionally, the polymerase contains an intrinsic ribonuclease H (RNase H) activity that specifically degrades RNA/DNA heteroduplexes or duplex DNA substrates in the 5' to 3' direction. Therefore, it can catalyze the excision of the RNA primers that initiate the synthesis of Okazaki fragments at a replication fork during viral DNA replication. The sequence is that of DNA polymerase catalytic subunit (MDV043) from Gallid herpesvirus 2 (strain Chicken/Md5/ATCC VR-987) (GaHV-2).